The sequence spans 186 residues: Large ribosomal subunit protein uL22 (186 aa).

Residues 159-186 (KAAENEPAKKKLSKKKLQRQKEKMMRNE) are disordered. A compositionally biased stretch (basic and acidic residues) spans 177 to 186 (RQKEKMMRNE).

This sequence belongs to the universal ribosomal protein uL22 family.

The protein is Large ribosomal subunit protein uL22 (RpL17) of Aedes albopictus (Asian tiger mosquito).